We begin with the raw amino-acid sequence, 338 residues long: Fructose-1,6-bisphosphatase class 1 1 (338 aa).

Residues glutamate 94, aspartate 116, leucine 118, and aspartate 119 each contribute to the Mg(2+) site. Residues 119–122 (DGSS), asparagine 210, and lysine 276 each bind substrate. Residue glutamate 282 coordinates Mg(2+).

This sequence belongs to the FBPase class 1 family. In terms of assembly, homotetramer. Mg(2+) serves as cofactor.

It localises to the cytoplasm. It catalyses the reaction beta-D-fructose 1,6-bisphosphate + H2O = beta-D-fructose 6-phosphate + phosphate. It participates in carbohydrate biosynthesis; gluconeogenesis. This chain is Fructose-1,6-bisphosphatase class 1 1, found in Paraburkholderia xenovorans (strain LB400).